The sequence spans 235 residues: 7-cyano-7-deazaguanine synthase (235 aa).

9 to 19 (FSGGQDSTTCL) contacts ATP. Positions 197, 212, 215, and 218 each coordinate Zn(2+).

This sequence belongs to the QueC family. It depends on Zn(2+) as a cofactor.

It catalyses the reaction 7-carboxy-7-deazaguanine + NH4(+) + ATP = 7-cyano-7-deazaguanine + ADP + phosphate + H2O + H(+). It functions in the pathway purine metabolism; 7-cyano-7-deazaguanine biosynthesis. Functionally, catalyzes the ATP-dependent conversion of 7-carboxy-7-deazaguanine (CDG) to 7-cyano-7-deazaguanine (preQ(0)). This is 7-cyano-7-deazaguanine synthase from Polaromonas sp. (strain JS666 / ATCC BAA-500).